Consider the following 1516-residue polypeptide: Myosin-52 (1516 aa).

Residues 7 to 62 (YKGLQCWIPDEQSQWIPGSIKDCRVEGEKAFLTVQDENENETVITVKPDDLNYEGR) form the Myosin N-terminal SH3-like domain. The Myosin motor domain occupies 73-766 (SDADDLTDLS…VTPLLESARD (694 aa)). Residue 167–174 (GESGAGKT) coordinates ATP. Residues 647 to 669 (LVSLMSTINETNAHYIRCIKPNE) form an actin-binding region. 5 IQ domains span residues 793 to 813 (RKRV…RHTE), 818 to 838 (SSNI…KEFI), 840 to 865 (TKNS…EKTK), 866 to 886 (HDAT…KHYK), and 888 to 917 (LQYY…ESTK). Residues 926–1034 (YRLESRLFEI…LKSQLKNYDM (109 aa)) adopt a coiled-coil conformation. Phosphoserine occurs at positions 1065 and 1072. The region spanning 1163–1431 (ERYCVHTLEY…SELSKNIVAE (269 aa)) is the Dilute domain.

This sequence belongs to the TRAFAC class myosin-kinesin ATPase superfamily. Myosin family.

It is found in the cytoplasm. Its function is as follows. Involved in cell wall deposition where it has a role in the localization of mok1. The protein is Myosin-52 (myo52) of Schizosaccharomyces pombe (strain 972 / ATCC 24843) (Fission yeast).